The chain runs to 911 residues: Pesticidal crystal protein Cry1Af (911 aa).

Belongs to the delta endotoxin family.

Promotes colloidosmotic lysis by binding to the midgut epithelial cells of both dipteran and lepidopteran larvae. This Bacillus thuringiensis protein is Pesticidal crystal protein Cry1Af (cry1Af).